The primary structure comprises 274 residues: Large ribosomal subunit protein uL2 (274 aa).

The disordered stretch occupies residues 223–265; the sequence is VVMNPVDHPHGGGEGRTSGGRHPVSPWGVPTKGYKTRSNKRTD.

Belongs to the universal ribosomal protein uL2 family. As to quaternary structure, part of the 50S ribosomal subunit. Forms a bridge to the 30S subunit in the 70S ribosome.

Its function is as follows. One of the primary rRNA binding proteins. Required for association of the 30S and 50S subunits to form the 70S ribosome, for tRNA binding and peptide bond formation. It has been suggested to have peptidyltransferase activity; this is somewhat controversial. Makes several contacts with the 16S rRNA in the 70S ribosome. The polypeptide is Large ribosomal subunit protein uL2 (Vibrio vulnificus (strain CMCP6)).